A 182-amino-acid chain; its full sequence is Large ribosomal subunit protein uL10 (182 aa).

This sequence belongs to the universal ribosomal protein uL10 family. In terms of assembly, part of the ribosomal stalk of the 50S ribosomal subunit. The N-terminus interacts with L11 and the large rRNA to form the base of the stalk. The C-terminus forms an elongated spine to which L12 dimers bind in a sequential fashion forming a multimeric L10(L12)X complex.

Its function is as follows. Forms part of the ribosomal stalk, playing a central role in the interaction of the ribosome with GTP-bound translation factors. The chain is Large ribosomal subunit protein uL10 from Parafrankia sp. (strain EAN1pec).